A 353-amino-acid polypeptide reads, in one-letter code: UPF0324 membrane protein PP_3661 (353 aa).

Helical transmembrane passes span 20 to 42, 70 to 92, 105 to 127, 137 to 159, 166 to 188, 234 to 253, 266 to 288, and 326 to 348; these read LNGILFVALFAVAVTQLAAMPAI, ASWAAGINFSARGLLRIAVAFFG, WSGLIVSVLVVTSTLLIGLWCGM, ALLTAAGSAICGAAAVLAFESAL, SAMAVGSVVLFGTLSMFLYPLAI, MTRVMLLVPVLLVVGLWISR, IAMPWFAFGFLALVLVNSMQVLP, and ALATGAILNLWLVGGGLAITLGV.

The protein belongs to the UPF0324 family.

The protein localises to the cell membrane. The protein is UPF0324 membrane protein PP_3661 of Pseudomonas putida (strain ATCC 47054 / DSM 6125 / CFBP 8728 / NCIMB 11950 / KT2440).